The following is a 121-amino-acid chain: Basic phospholipase A2 CoaTx-II (121 aa).

Intrachain disulfides connect cysteine 26–cysteine 115, cysteine 28–cysteine 44, cysteine 43–cysteine 95, cysteine 49–cysteine 121, cysteine 50–cysteine 88, cysteine 57–cysteine 81, and cysteine 75–cysteine 86. Residues 105–117 are important for membrane-damaging activities in eukaryotes and bacteria; heparin-binding; sequence KKYRIYPKFLCKK.

It belongs to the phospholipase A2 family. Group II subfamily. K49 sub-subfamily. In terms of assembly, homodimer; non-covalently-linked. As to expression, expressed by the venom gland.

The protein localises to the secreted. In terms of biological role, snake venom phospholipase A2 (PLA2) that lacks enzymatic inactivity. It shows antibacterial activity against both Gram-negative and Gram-positive bacteria, including methicillin-resistant strains. In vivo, it causes local muscular damage, but no systemic damage (intravenous administration does not elevate plasma creatine kinase). Also causes an inflammatory activity that is demonstrated by mice paw edema induction and pro-inflammatory cytokine IL-6 elevation. A model of myotoxic mechanism has been proposed: an apo Lys49-PLA2 is activated by the entrance of a hydrophobic molecule (e.g. fatty acid) at the hydrophobic channel of the protein leading to a reorientation of a monomer. This reorientation causes a transition between 'inactive' to 'active' states, causing alignment of C-terminal and membrane-docking sites (MDoS) side-by-side and putting the membrane-disruption sites (MDiS) in the same plane, exposed to solvent and in a symmetric position for both monomers. The MDoS region stabilizes the toxin on membrane by the interaction of charged residues with phospholipid head groups. Subsequently, the MDiS region destabilizes the membrane with penetration of hydrophobic residues. This insertion causes a disorganization of the membrane, allowing an uncontrolled influx of ions (i.e. calcium and sodium), and eventually triggering irreversible intracellular alterations and cell death. The sequence is that of Basic phospholipase A2 CoaTx-II from Crotalus lutosus abyssus (Grand Canyon rattlesnake).